A 347-amino-acid chain; its full sequence is RNA 3'-terminal phosphate cyclase (347 aa).

ATP-binding positions include glutamine 101 and 286–289 (HMAD). Histidine 312 serves as the catalytic Tele-AMP-histidine intermediate.

Belongs to the RNA 3'-terminal cyclase family. Type 1 subfamily.

It localises to the cytoplasm. The enzyme catalyses a 3'-end 3'-phospho-ribonucleotide-RNA + ATP = a 3'-end 2',3'-cyclophospho-ribonucleotide-RNA + AMP + diphosphate. Its function is as follows. Catalyzes the conversion of 3'-phosphate to a 2',3'-cyclic phosphodiester at the end of RNA. The mechanism of action of the enzyme occurs in 3 steps: (A) adenylation of the enzyme by ATP; (B) transfer of adenylate to an RNA-N3'P to produce RNA-N3'PP5'A; (C) and attack of the adjacent 2'-hydroxyl on the 3'-phosphorus in the diester linkage to produce the cyclic end product. The biological role of this enzyme is unknown but it is likely to function in some aspects of cellular RNA processing. This is RNA 3'-terminal phosphate cyclase from Pyrobaculum neutrophilum (strain DSM 2338 / JCM 9278 / NBRC 100436 / V24Sta) (Thermoproteus neutrophilus).